The following is a 95-amino-acid chain: Neutrophil antibiotic peptide NP-4 (95 aa).

An N-terminal signal peptide occupies residues 1-19 (MRTLALLAAILLVTLQAQA). Residues 20-62 (ELHSGMADDGVDQQQPRAQDLDVAVYIKQDETSPLEVLGAKAG) constitute a propeptide that is removed on maturation. Cystine bridges form between Cys65/Cys93, Cys67/Cys82, and Cys72/Cys92.

Belongs to the alpha-defensin family.

Its subcellular location is the secreted. Functionally, microbicidal activity. This is Neutrophil antibiotic peptide NP-4 from Oryctolagus cuniculus (Rabbit).